The sequence spans 885 residues: Envelope glycoprotein gp160 (885 aa).

Positions Met-1–Val-23 are cleaved as a signal peptide. The Extracellular portion of the chain corresponds to Gln-24–Gly-700. Asn-37 carries N-linked (GlcNAc...) asparagine; by host glycosylation. Cys-44 and Cys-57 are disulfide-bonded. 17 N-linked (GlcNAc...) asparagine; by host glycosylation sites follow: Asn-70, Asn-114, Asn-148, Asn-156, Asn-173, Asn-186, Asn-201, Asn-213, Asn-245, Asn-255, Asn-279, Asn-285, Asn-296, Asn-307, Asn-317, Asn-372, and Asn-378. 5 cysteine pairs are disulfide-bonded: Cys-101–Cys-221, Cys-108–Cys-212, Cys-113–Cys-170, Cys-234–Cys-264, and Cys-244–Cys-256. The V1 stretch occupies residues Cys-113–Gly-169. The interval Cys-170 to Cys-212 is V2. The segment at Cys-312–Trp-344 is V3. Cys-312 and Cys-345 form a disulfide bridge. 2 cysteine pairs are disulfide-bonded: Cys-396/Cys-465 and Cys-403/Cys-438. The V4 stretch occupies residues Cys-403 to Cys-438. Asn-466, Asn-482, and Asn-485 each carry an N-linked (GlcNAc...) asparagine; by host glycan. The interval Ser-481–Met-488 is V5. Positions Gly-532–Ala-552 are fusion peptide. Positions Leu-595 to Gln-611 are immunosuppression. Asn-631, Asn-640, and Asn-656 each carry an N-linked (GlcNAc...) asparagine; by host glycan. A coiled-coil region spans residues Asn-640–Met-672. The segment at Lys-677–Gln-698 is MPER; binding to GalCer. A helical membrane pass occupies residues Val-701–Ala-721. The Cytoplasmic portion of the chain corresponds to Arg-722–Leu-885. The YXXV motif; contains endocytosis signal signature appears at Tyr-727–Val-730. The tract at residues Ile-743 to Gly-764 is disordered. Positions Lys-745–Gly-764 are enriched in basic and acidic residues. A lipid anchor (S-palmitoyl cysteine; by host) is attached at Cys-793. Residues Leu-884–Leu-885 carry the Di-leucine internalization motif motif.

In terms of assembly, the mature envelope protein (Env) consists of a homotrimer of non-covalently associated gp120-gp41 heterodimers. The resulting complex protrudes from the virus surface as a spike. Interacts with host CD4 and CCR5. Gp120 also interacts with the C-type lectins CD209/DC-SIGN and CLEC4M/DC-SIGNR (collectively referred to as DC-SIGN(R)). As to quaternary structure, the mature envelope protein (Env) consists of a homotrimer of non-covalently associated gp120-gp41 heterodimers. The resulting complex protrudes from the virus surface as a spike. In terms of processing, specific enzymatic cleavages in vivo yield mature proteins. Envelope glycoproteins are synthesized as an inactive precursor that is heavily N-glycosylated and processed likely by host cell furin in the Golgi to yield the mature SU and TM proteins. The cleavage site between SU and TM requires the minimal sequence [KR]-X-[KR]-R. Post-translationally, palmitoylation of the transmembrane protein and of Env polyprotein (prior to its proteolytic cleavage) is essential for their association with host cell membrane lipid rafts. Palmitoylation is therefore required for envelope trafficking to classical lipid rafts, but not for viral replication.

Its subcellular location is the virion membrane. The protein resides in the host cell membrane. It localises to the host endosome membrane. Its function is as follows. The surface protein gp120 (SU) attaches the virus to the host lymphoid cell by binding to the primary receptor CD4. This interaction induces a structural rearrangement creating a high affinity binding site for a chemokine coreceptor like CCR5. This peculiar 2 stage receptor-interaction strategy allows gp120 to maintain the highly conserved coreceptor-binding site in a cryptic conformation, protected from neutralizing antibodies. These changes are transmitted to the transmembrane protein gp41 and are thought to activate its fusogenic potential by unmasking its fusion peptide. Functionally, surface protein gp120 (SU) may target the virus to gut-associated lymphoid tissue (GALT) by binding host ITGA4/ITGB7 (alpha-4/beta-7 integrins), a complex that mediates T-cell migration to the GALT. Interaction between gp120 and ITGA4/ITGB7 would allow the virus to enter GALT early in the infection, infecting and killing most of GALT's resting CD4+ T-cells. This T-cell depletion is believed to be the major insult to the host immune system leading to AIDS. In terms of biological role, the surface protein gp120 is a ligand for CD209/DC-SIGN and CLEC4M/DC-SIGNR, which are respectively found on dendritic cells (DCs), and on endothelial cells of liver sinusoids and lymph node sinuses. These interactions allow capture of viral particles at mucosal surfaces by these cells and subsequent transmission to permissive cells. DCs are professional antigen presenting cells, critical for host immunity by inducing specific immune responses against a broad variety of pathogens. They act as sentinels in various tissues where they take up antigen, process it, and present it to T-cells following migration to lymphoid organs. SIV subverts the migration properties of dendritic cells to gain access to CD4+ T-cells in lymph nodes. Virus transmission to permissive T-cells occurs either in trans (without DCs infection, through viral capture and transmission), or in cis (following DCs productive infection, through the usual CD4-gp120 interaction), thereby inducing a robust infection. In trans infection, bound virions remain infectious over days and it is proposed that they are not degraded, but protected in non-lysosomal acidic organelles within the DCs close to the cell membrane thus contributing to the viral infectious potential during DCs' migration from the periphery to the lymphoid tissues. On arrival at lymphoid tissues, intact virions recycle back to DCs' cell surface allowing virus transmission to CD4+ T-cells. Virion capture also seems to lead to MHC-II-restricted viral antigen presentation, and probably to the activation of SIV-specific CD4+ cells. The transmembrane protein gp41 (TM) acts as a class I viral fusion protein. Under the current model, the protein has at least 3 conformational states: pre-fusion native state, pre-hairpin intermediate state, and post-fusion hairpin state. During fusion of viral and target intracellular membranes, the coiled coil regions (heptad repeats) assume a trimer-of-hairpins structure, positioning the fusion peptide in close proximity to the C-terminal region of the ectodomain. The formation of this structure appears to drive apposition and subsequent fusion of viral and target cell membranes. Complete fusion occurs in host cell endosomes. The virus undergoes clathrin-dependent internalization long before endosomal fusion, thus minimizing the surface exposure of conserved viral epitopes during fusion and reducing the efficacy of inhibitors targeting these epitopes. Membranes fusion leads to delivery of the nucleocapsid into the cytoplasm. Its function is as follows. The envelope glycoprotein gp160 precursor down-modulates cell surface CD4 antigen by interacting with it in the endoplasmic reticulum and blocking its transport to the cell surface. Functionally, the gp120-gp41 heterodimer allows rapid transcytosis of the virus through CD4 negative cells such as simple epithelial monolayers of the intestinal, rectal and endocervical epithelial barriers. Both gp120 and gp41 specifically recognize glycosphingolipids galactosyl-ceramide (GalCer) or 3' sulfo-galactosyl-ceramide (GalS) present in the lipid rafts structures of epithelial cells. Binding to these alternative receptors allows the rapid transcytosis of the virus through the epithelial cells. This transcytotic vesicle-mediated transport of virions from the apical side to the basolateral side of the epithelial cells does not involve infection of the cells themselves. This is Envelope glycoprotein gp160 (env) from Cercopithecidae (Old World monkeys).